The sequence spans 116 residues: Cocaine- and amphetamine-regulated transcript protein (116 aa).

Positions 1–27 (MESSRVRLLPLLGAALLLMLPLLGTRA) are cleaved as a signal peptide. Tyr41 is subject to Phosphotyrosine. Ser48 is modified (phosphoserine). 3 disulfides stabilise this stretch: Cys82–Cys100, Cys88–Cys108, and Cys102–Cys115.

The protein belongs to the CART family. As to expression, hypothalamus. Found in neurons of the ventrolateral part of the arcuate nucleus, in the external zone of the median eminence, and also found in terminals in the periventricular part of the paraventricular nucleus.

Its subcellular location is the secreted. Functionally, satiety factor closely associated with the actions of leptin and neuropeptide Y; this anorectic peptide inhibits both normal and starvation-induced feeding and completely blocks the feeding response induced by neuropeptide Y and regulated by leptin in the hypothalamus. It promotes neuronal development and survival in vitro. This Homo sapiens (Human) protein is Cocaine- and amphetamine-regulated transcript protein (CARTPT).